A 631-amino-acid polypeptide reads, in one-letter code: uncharacterized protein (631 aa).

Transmembrane regions (helical) follow at residues 42–62 (VLVGALAGHTDYGLIASIGGF), 76–96 (ALKLLLVSIGIALSFGLGTLL), 106–128 (VLGLIGAAAMFIFSALGIQGPAP), 152–172 (AGLTFLGGIFAMGIALIGWLW), 344–364 (ALKYGIVLFAADMFALAFGFA), 366–386 (SYWIPLSAAAVMLGTTVVFTL), 398–418 (IGVILAGAILFFKPGGVYIAF), 429–449 (MLIVRNYALAVPFLTANALVI), and 464–484 (IARLTDVAVGSVIGLLGTMLL).

This sequence belongs to the YccS/YhfK family.

The protein localises to the cell membrane. This is an uncharacterized protein from Bacillus subtilis (strain 168).